A 315-amino-acid chain; its full sequence is Methionyl-tRNA formyltransferase (315 aa).

107 to 110 contributes to the (6S)-5,6,7,8-tetrahydrofolate binding site; sequence SLLP.

Belongs to the Fmt family.

It carries out the reaction L-methionyl-tRNA(fMet) + (6R)-10-formyltetrahydrofolate = N-formyl-L-methionyl-tRNA(fMet) + (6S)-5,6,7,8-tetrahydrofolate + H(+). Attaches a formyl group to the free amino group of methionyl-tRNA(fMet). The formyl group appears to play a dual role in the initiator identity of N-formylmethionyl-tRNA by promoting its recognition by IF2 and preventing the misappropriation of this tRNA by the elongation apparatus. This is Methionyl-tRNA formyltransferase from Borrelia garinii subsp. bavariensis (strain ATCC BAA-2496 / DSM 23469 / PBi) (Borreliella bavariensis).